Here is a 471-residue protein sequence, read N- to C-terminus: N(6)-adenine-specific methyltransferase METTL4 (471 aa).

It belongs to the MT-A70-like family.

It is found in the nucleus. The catalysed reaction is a 2'-O-methyladenosine in U2 snRNA + S-adenosyl-L-methionine = an N(6)-methyl-2'-O-methyladenosine in U2 snRNA + S-adenosyl-L-homocysteine + H(+). It carries out the reaction a 2'-deoxyadenosine in DNA + S-adenosyl-L-methionine = an N(6)-methyl-2'-deoxyadenosine in DNA + S-adenosyl-L-homocysteine + H(+). N(6)-adenine-specific methyltransferase that can methylate both RNAs and DNA. Acts as a N(6)-adenine-specific RNA methyltransferase by catalyzing formation of N6,2'-O-dimethyladenosine (m6A(m)) on internal positions of U2 small nuclear RNA (snRNA): methylates the 6th position of adenine residues with a pre-deposited 2'-O-methylation. Internal m6A(m) methylation of snRNAs regulates RNA splicing. Also able to act as a N(6)-adenine-specific DNA methyltransferase by mediating methylation of DNA on the 6th position of adenine (N(6)-methyladenosine). The existence of N(6)-methyladenosine (m6A) on DNA is however unclear in mammals, and additional evidences are required to confirm the role of the N(6)-adenine-specific DNA methyltransferase activity of METTL4 in vivo. Acts as a regulator of mitochondrial transcript levels and mitochondrial DNA (mtDNA) copy number by mediating mtDNA N(6)-methylation: m6A on mtDNA reduces transcription by repressing TFAM DNA-binding and bending. N(6)-methyladenosine deposition by METTL4 regulates Polycomb silencing by triggering ubiquitination and degradation of sensor proteins ASXL1 and MPND, leading to inactivation of the PR-DUB complex and subsequent preservation of Polycomb silencing. In Mus musculus (Mouse), this protein is N(6)-adenine-specific methyltransferase METTL4.